We begin with the raw amino-acid sequence, 466 residues long: Histidine--tRNA ligase (466 aa).

This sequence belongs to the class-II aminoacyl-tRNA synthetase family. In terms of assembly, homodimer.

The protein localises to the cytoplasm. The catalysed reaction is tRNA(His) + L-histidine + ATP = L-histidyl-tRNA(His) + AMP + diphosphate + H(+). The polypeptide is Histidine--tRNA ligase (Xylella fastidiosa (strain M12)).